Reading from the N-terminus, the 777-residue chain is MNTKILETLEFSKIKELFAPYLLTEQGQLELGLLLPTSKKETVVSAFLEMTDMQQIFVQHPHFSLAATQDITALTKRLELESDLNIEEFLALKRVLAVTQELKSFYEDLENVHLEKLDRLFDNLAVFPKLQGSLQAVNDGGFIESFASESLSRIRRKIQENENQVREILQEILKNKGEMLADQVVASRNGRNVLPVKNTYRNRISGVVHDISASGNTVYIEPRAVVNLNEEIASSRADERYEIQRILQELSDLFRPHAAEIANNAWIIGHLDLVRAKVRFMQETGAVVPDLSEEQDIQLLSVRHPLIENAVANDLHFGLDLTEIVITGPNTGGKTIMLKTLGLAQIMAQSGLPILADKGSRVGIFSQIFADIGDEQSIEQSLSTFSSHMTNIVSILEQVDSESLVLLDELGAGTDPQEGAALAIAILEDLRLRQIKTMATTHYPELKAYGIETDWVENASMEFDTDSLRPTYRFMQGVPGRSNAFEIAQRLGLSEVIVGHAQEQTDTDSDVNRIIERLEEQTLESRKRLDNIREVEQENLKFNRALKKLYNEFNREKETELNKARLEAQEIVDLALSESESILKNLHDKSSLKPHEIIEAKAQLKKLAPETVDLSKNKVLKQAKKNRAPKVGDDILVTSYGQRGTLVKQLKDGRWEAQVGLIKMTLEEQEFNLLKAEKEQQPKRKQVNVVKRANTAGPKARLDLRGKRYEEAMEELDAFIDQALLNNMAQVDIIHGIGTGVIREGVTKYLRRNKHVKSFGYAPQNAGGSGATIVIFK.

Residue 328–335 participates in ATP binding; sequence GPNTGGKT. The Smr domain occupies 702 to 777; it reads LDLRGKRYEE…GSGATIVIFK (76 aa).

It belongs to the DNA mismatch repair MutS family. MutS2 subfamily. Homodimer. Binds to stalled ribosomes, contacting rRNA.

Its function is as follows. Endonuclease that is involved in the suppression of homologous recombination and thus may have a key role in the control of bacterial genetic diversity. Functionally, acts as a ribosome collision sensor, splitting the ribosome into its 2 subunits. Detects stalled/collided 70S ribosomes which it binds and splits by an ATP-hydrolysis driven conformational change. Acts upstream of the ribosome quality control system (RQC), a ribosome-associated complex that mediates the extraction of incompletely synthesized nascent chains from stalled ribosomes and their subsequent degradation. Probably generates substrates for RQC. This chain is Endonuclease MutS2, found in Streptococcus sanguinis (strain SK36).